A 119-amino-acid chain; its full sequence is Small ribosomal subunit protein uS10 (119 aa).

A2 carries the post-translational modification N-acetylalanine. Residue K4 forms a Glycyl lysine isopeptide (Lys-Gly) (interchain with G-Cter in ubiquitin) linkage. K8 bears the N6-succinyllysine; alternate mark. A Glycyl lysine isopeptide (Lys-Gly) (interchain with G-Cter in ubiquitin); alternate cross-link involves residue K8. Residue T9 is modified to Phosphothreonine. 2 positions are modified to N6-acetyllysine: K34 and K75. S93 is modified (phosphoserine).

Belongs to the universal ribosomal protein uS10 family. Component of the 40S small ribosomal subunit. In terms of processing, polyubiquitinated by ZNF598 via 'Lys-63'-linked ubiquitin chains when a ribosome has stalled, initiating the ribosome quality control (RQC) pathway to degrade the potentially detrimental aberrant nascent polypeptide. Deubiquitinated by OTUD3 and USP21, antagonizing ZNF598 activity. Ufmylated by UFL1.

The protein resides in the cytoplasm. Its function is as follows. Component of the small ribosomal subunit. The ribosome is a large ribonucleoprotein complex responsible for the synthesis of proteins in the cell. In Rattus norvegicus (Rat), this protein is Small ribosomal subunit protein uS10 (Rps20).